Here is a 532-residue protein sequence, read N- to C-terminus: Fe-S cluster assembly factor HCF101, chloroplastic (532 aa).

The N-terminal 61 residues, 1-61 (MPLLHPQSLR…RVSQNLSVAK (61 aa)), are a transit peptide targeting the chloroplast. Ala62 is subject to N-acetylalanine. 184–191 (CKGGVGKS) serves as a coordination point for ATP.

This sequence belongs to the Mrp/NBP35 ATP-binding proteins family. Requires [4Fe-4S] cluster as cofactor. As to expression, expressed in aerial tissues exposed to light. Very low expression in roots.

Its subcellular location is the plastid. It localises to the chloroplast stroma. Functionally, required for photosystem I (PSI) biosynthesis and assembly. May serve as a chloroplast scaffold protein that specifically assembles iron-sulfur (4Fe-4S) clusters and transfers them to the chloroplast PSI and ferredoxin-thioredoxin (FTR) complexes. Can assemble a 4Fe-4S cluster and transfer it to apoproteins in yeast cells. Probably not required for assembly or stability of plastidic 2Fe-2S clusters. This Arabidopsis thaliana (Mouse-ear cress) protein is Fe-S cluster assembly factor HCF101, chloroplastic (HCF101).